Consider the following 369-residue polypeptide: Protein-glutamate methylesterase/protein-glutamine glutaminase 1 (369 aa).

In terms of domain architecture, Response regulatory spans 3 to 120 (KVVVVDDSAF…SLDIVKIEKD (118 aa)). Position 54 is a 4-aspartylphosphate (D54). Over residues 136–168 (RSFRPAPAVRPAAPAALRATPRPSAAPSSAASS) the composition is skewed to low complexity. A disordered region spans residues 136-174 (RSFRPAPAVRPAAPAALRATPRPSAAPSSAASSTGTLQV). The CheB-type methylesterase domain maps to 177–369 (GKPVRDVVAI…AQAIMNAVYK (193 aa)). Residues S189, H216, and D312 contribute to the active site.

This sequence belongs to the CheB family. Phosphorylated by CheA. Phosphorylation of the N-terminal regulatory domain activates the methylesterase activity.

It is found in the cytoplasm. It carries out the reaction [protein]-L-glutamate 5-O-methyl ester + H2O = L-glutamyl-[protein] + methanol + H(+). The catalysed reaction is L-glutaminyl-[protein] + H2O = L-glutamyl-[protein] + NH4(+). Involved in chemotaxis. Part of a chemotaxis signal transduction system that modulates chemotaxis in response to various stimuli. Catalyzes the demethylation of specific methylglutamate residues introduced into the chemoreceptors (methyl-accepting chemotaxis proteins or MCP) by CheR. Also mediates the irreversible deamidation of specific glutamine residues to glutamic acid. This chain is Protein-glutamate methylesterase/protein-glutamine glutaminase 1, found in Oleidesulfovibrio alaskensis (strain ATCC BAA-1058 / DSM 17464 / G20) (Desulfovibrio alaskensis).